The sequence spans 220 residues: Phosphatidylinositol phosphate synthase (220 aa).

Helical transmembrane passes span 21–46 (LLRA…ALTL) and 52–72 (LFWG…DGAM). A CDP-1,2-diacyl-sn-glycerol is bound at residue 29–32 (DTVT). Mg(2+) contacts are provided by Asp66 and Asp69. Positions 70, 74, and 80 each coordinate a CDP-1,2-diacyl-sn-glycerol. The Mg(2+) site is built by Asp87 and Asp91. The Proton acceptor role is filled by Asp91. The next 4 membrane-spanning stretches (helical) occupy residues 93-110 (VADG…AFGW), 116-134 (VVAT…YVKA), 154-171 (LIIV…GVQW), and 177-194 (MWVL…RMHA).

This sequence belongs to the CDP-alcohol phosphatidyltransferase class-I family. In terms of assembly, homodimer. It depends on Mg(2+) as a cofactor.

It localises to the cell membrane. It carries out the reaction a CDP-1,2-diacyl-sn-glycerol + 1D-myo-inositol 3-phosphate = a 1,2-diacyl-sn-glycero-3-phospho-(1D-myo-inositol-3-phosphate) + CMP + H(+). The enzyme catalyses 1,2-di-(9Z-octadecenoyl)-sn-glycero-3-cytidine-5'-diphosphate + 1D-myo-inositol 3-phosphate = 1,2-di-(9Z-octadecenoyl)-sn-glycero-3-phospho-(1D-myo-inositol-3-phosphate) + CMP + H(+). The protein operates within phospholipid metabolism; phosphatidylinositol phosphate biosynthesis. Its function is as follows. Catalyzes the conjugation of the 1'-hydroxyl group of D-myo-inositol-3-phosphate (also named L-myo-inositol-1-phosphate) with a lipid tail of cytidine diphosphate diacylglycerol (CDP-DAG), forming phosphatidylinositol phosphate (PIP) and CMP. PIP is a precursor of phosphatidylinositol (PI) which is an essential lipid for mycobacteria required for formation of their cell wall. This is Phosphatidylinositol phosphate synthase from Mycobacteroides abscessus (strain ATCC 19977 / DSM 44196 / CCUG 20993 / CIP 104536 / JCM 13569 / NCTC 13031 / TMC 1543 / L948) (Mycobacterium abscessus).